The primary structure comprises 164 residues: MNELRQRWQAMSQRERQLMVVCAAVLLLCVVYYAILQPWQEREDLWERTISREQQTVNWMQKQASSIPRGNQAQGDNSQRDVSLPILISQSTKRYGLTVVRLQPQGSQASVTLGQSDFNSLLRWLGELEQKNGVKVISLDVNAVEQSPGIVDVTRLMLERTDEA.

Over 1 to 17 (MNELRQRWQAMSQRERQ) the chain is Cytoplasmic. The helical transmembrane segment at 18–38 (LMVVCAAVLLLCVVYYAILQP) threads the bilayer. Over 39 to 164 (WQEREDLWER…RLMLERTDEA (126 aa)) the chain is Periplasmic.

Belongs to the GSP M family. Type II secretion system is composed of four main components: the outer membrane complex, the inner membrane complex, the cytoplasmic secretion ATPase and the periplasm-spanning pseudopilus. Forms homodimers. Interacts with OutL/GspL. Interacts with OutE/GspE and OutF/GspF.

Its subcellular location is the cell inner membrane. In terms of biological role, inner membrane component of the type II secretion system required for the energy-dependent secretion of extracellular factors such as proteases and toxins from the periplasm. Plays a role in the complex assembly and recruits OutL resulting in a stable complex in the inner membrane. Provides thus a link between the energy-providing OutE protein in the cytoplasm and the rest of the T2SS machinery. The protein is Type II secretion system protein M (outM) of Pectobacterium carotovorum subsp. carotovorum (Erwinia carotovora subsp. carotovora).